Reading from the N-terminus, the 285-residue chain is MTGTTARRTVVSVAVSAALACVTACTGPGGSDDAGHSTGPTGSARPSASAPASSRAPALTGPSADALRKVERATGRAGSARVESTTVMGRELSLEAAGALGWDDGLTGTLTITYTGGTTAETMRRLGTTAMEARYLPDAYYARMGDEFAERVGGRHWIKYVYEDLEDLGGGAGAGFADQMRNTTPNQAVKLLLSAQDVRRVGEETTRGRRTTHWSGTMGGATAQSVDIWVDDRDLLVKKVERGRTETGELTQTAYYSDYGVRVLAERPPAADTADFKELLASQGS.

A signal peptide spans 1–20 (MTGTTARRTVVSVAVSAALA). Residue Cys-21 is the site of N-palmitoyl cysteine attachment. Cys-21 carries S-diacylglycerol cysteine lipidation. A disordered region spans residues 27 to 63 (GPGGSDDAGHSTGPTGSARPSASAPASSRAPALTGPS). A compositionally biased stretch (low complexity) spans 43–58 (SARPSASAPASSRAPA).

It is found in the cell membrane. This chain is Putative lipoprotein SCO4650, found in Streptomyces coelicolor (strain ATCC BAA-471 / A3(2) / M145).